The following is a 377-amino-acid chain: Nitric oxide reductase FlRd-NAD(+) reductase (377 aa).

This sequence belongs to the FAD-dependent oxidoreductase family. FAD serves as cofactor.

It localises to the cytoplasm. It catalyses the reaction 2 reduced [nitric oxide reductase rubredoxin domain] + NAD(+) + H(+) = 2 oxidized [nitric oxide reductase rubredoxin domain] + NADH. Its pathway is nitrogen metabolism; nitric oxide reduction. Its function is as follows. One of at least two accessory proteins for anaerobic nitric oxide (NO) reductase. Reduces the rubredoxin moiety of NO reductase. This Escherichia coli O157:H7 protein is Nitric oxide reductase FlRd-NAD(+) reductase.